Consider the following 542-residue polypeptide: Zinc finger CCHC domain-containing protein 7 (542 aa).

Residues 110–144 (QAQEKTQSPATPRSNKVANKCKRSNKKPEPEESPS) form a disordered region. The span at 112-126 (QEKTQSPATPRSNKV) shows a compositional bias: polar residues. Glycyl lysine isopeptide (Lys-Gly) (interchain with G-Cter in SUMO2) cross-links involve residues K129 and K136. S142 carries the post-translational modification Phosphoserine. Residues K236 and K251 each participate in a glycyl lysine isopeptide (Lys-Gly) (interchain with G-Cter in SUMO2) cross-link. 3 consecutive CCHC-type zinc fingers follow at residues 238–255 (VTCR…NCPL), 260–277 (RPCC…GCPA), and 301–318 (KRCD…ACPE). K336 participates in a covalent cross-link: Glycyl lysine isopeptide (Lys-Gly) (interchain with G-Cter in SUMO2). Residues 345–362 (VYCYNCAQKGHYGHECTE) form a CCHC-type 4 zinc finger. Positions 396–542 (LKDIKKNGDF…RKKKPKSSGF (147 aa)) are disordered. K410 is covalently cross-linked (Glycyl lysine isopeptide (Lys-Gly) (interchain with G-Cter in SUMO2)). The segment covering 412 to 421 (PHGEETDRYH) has biased composition (basic and acidic residues). The segment covering 422–435 (HDRRKSRFSGKRSR) has biased composition (basic residues). K432 is covalently cross-linked (Glycyl lysine isopeptide (Lys-Gly) (interchain with G-Cter in SUMO2)). The span at 436–456 (WPRESKETQKEKTRGREGEKH) shows a compositional bias: basic and acidic residues. Residue K474 forms a Glycyl lysine isopeptide (Lys-Gly) (interchain with G-Cter in SUMO2) linkage. Positions 474–489 (KPNSSSSSNSQKPSKS) are enriched in low complexity. 2 positions are modified to phosphoserine: S478 and S480. Residues K485 and K488 each participate in a glycyl lysine isopeptide (Lys-Gly) (interchain with G-Cter in SUMO2) cross-link. Composition is skewed to basic and acidic residues over residues 499-510 (LREEKLRRESMR) and 518-528 (FVEDGSHDDLF). A Glycyl lysine isopeptide (Lys-Gly) (interchain with G-Cter in SUMO2) cross-link involves residue K531. Residues 531–542 (KQRKKKPKSSGF) are compositionally biased toward basic residues.

As to quaternary structure, component of a nucleolar TRAMP-like complex, an ATP-dependent exosome regulatory complex consisting of a helicase (MTREX), an oligadenylate polymerase (TENT4B or TENT4A), and a substrate specific RNA-binding factor (ZCCHC7 or ZCCHC8). Several TRAMP-like complexes exist with specific compositions and are associated with nuclear, or nucleolar RNA exosomes.

It localises to the nucleus. The protein localises to the nucleolus. In Rattus norvegicus (Rat), this protein is Zinc finger CCHC domain-containing protein 7 (Zcchc7).